A 103-amino-acid chain; its full sequence is Methane monooxygenase component D (103 aa).

The soluble methane monooxygenase (sMMO) consists of four components A/MMOH (composed of alpha/MmoX, beta/MmoY and gamma/MmoZ), B/MMOB (MmoB), C/MMOR (MmoC) and D/MMOD (MmoD).

This Methylococcus capsulatus (strain ATCC 33009 / NCIMB 11132 / Bath) protein is Methane monooxygenase component D (mmoD).